Consider the following 389-residue polypeptide: Chorismate synthase (389 aa).

NADP(+) is bound by residues arginine 40 and arginine 46. FMN is bound by residues 130–132 (RAS), 251–252 (QA), glycine 297, 312–316 (KPIST), and arginine 338.

Belongs to the chorismate synthase family. Homotetramer. The cofactor is FMNH2.

It carries out the reaction 5-O-(1-carboxyvinyl)-3-phosphoshikimate = chorismate + phosphate. The protein operates within metabolic intermediate biosynthesis; chorismate biosynthesis; chorismate from D-erythrose 4-phosphate and phosphoenolpyruvate: step 7/7. Catalyzes the anti-1,4-elimination of the C-3 phosphate and the C-6 proR hydrogen from 5-enolpyruvylshikimate-3-phosphate (EPSP) to yield chorismate, which is the branch point compound that serves as the starting substrate for the three terminal pathways of aromatic amino acid biosynthesis. This reaction introduces a second double bond into the aromatic ring system. The sequence is that of Chorismate synthase from Solibacter usitatus (strain Ellin6076).